Reading from the N-terminus, the 909-residue chain is Aconitate hydratase A (909 aa).

Positions 450, 516, and 519 each coordinate [4Fe-4S] cluster.

The protein belongs to the aconitase/IPM isomerase family. Monomer. The cofactor is [4Fe-4S] cluster.

The catalysed reaction is citrate = D-threo-isocitrate. The enzyme catalyses 3-hydroxybutane-1,2,3-tricarboxylate = 2-methyl-cis-aconitate + H2O. The protein operates within carbohydrate metabolism; tricarboxylic acid cycle; isocitrate from oxaloacetate: step 2/2. Functionally, involved in both the tricarboxylic acid (TCA) and methylcitric acid cycles. Catalyzes the reversible isomerization of citrate to isocitrate via cis-aconitate. Also catalyzes the rehydration of 2-methyl-cis-aconitate to produce 2-methylisocitrate. The apo form of AcnA functions as a RNA-binding regulatory protein which plays a role in the regulation of citrate concentration and in the sporulation. To prevent the accumulation of excessive levels of citrate, it binds near the 5' end of the citZ mRNA, decreasing its stability and thereby limiting the concentration of citrate synthase in the cell. Aconitase also binds to the gerE transcript late in sporulation and stabilizes it for translation, thereby increasing the rate and level of GerE protein accumulation. This is Aconitate hydratase A (citB) from Bacillus subtilis (strain 168).